The chain runs to 384 residues: Cysteine desulfurase (384 aa).

Pyridoxal 5'-phosphate-binding positions include 74–75, asparagine 154, glutamine 180, and 200–202; these read GT and SGH. N6-(pyridoxal phosphate)lysine is present on lysine 203. A pyridoxal 5'-phosphate-binding site is contributed by threonine 238. The active-site Cysteine persulfide intermediate is cysteine 325. Residue cysteine 325 participates in [2Fe-2S] cluster binding.

The protein belongs to the class-V pyridoxal-phosphate-dependent aminotransferase family. NifS/IscS subfamily. As to quaternary structure, homodimer. It depends on pyridoxal 5'-phosphate as a cofactor.

The enzyme catalyses (sulfur carrier)-H + L-cysteine = (sulfur carrier)-SH + L-alanine. Functionally, catalyzes the removal of elemental sulfur atoms from cysteine to produce alanine. Seems to participate in the biosynthesis of the nitrogenase metalloclusters by providing the inorganic sulfur required for the Fe-S core formation. In Rhodobacter capsulatus (Rhodopseudomonas capsulata), this protein is Cysteine desulfurase.